The sequence spans 295 residues: GTPase Era (295 aa).

Positions 5-172 (YCGYAAIIGR…EQAVHQLMPE (168 aa)) constitute an Era-type G domain. A G1 region spans residues 13–20 (GRPNVGKS). GTP is bound at residue 13–20 (GRPNVGKS). Residues 39-43 (QTTRY) form a G2 region. A G3 region spans residues 60-63 (DTPG). GTP contacts are provided by residues 60 to 64 (DTPGL) and 121 to 124 (NKVD). The segment at 121 to 124 (NKVD) is G4. A G5 region spans residues 151 to 153 (LSA). The KH type-2 domain maps to 203–279 (LGQEIPYSLA…FLQLWVKVKS (77 aa)).

It belongs to the TRAFAC class TrmE-Era-EngA-EngB-Septin-like GTPase superfamily. Era GTPase family. In terms of assembly, monomer.

The protein resides in the cytoplasm. It is found in the cell inner membrane. In terms of biological role, an essential GTPase that binds both GDP and GTP, with rapid nucleotide exchange. Plays a role in 16S rRNA processing and 30S ribosomal subunit biogenesis and possibly also in cell cycle regulation and energy metabolism. The chain is GTPase Era from Coxiella burnetii (strain RSA 331 / Henzerling II).